The chain runs to 167 residues: Inclusion membrane protein G (167 aa).

Transmembrane regions (helical) follow at residues 33–57 (VVLA…AVLF) and 63–88 (VLPY…LRSL). The interval 94–167 (SCKKRSPEEI…DNSRSRSRSF (74 aa)) is sufficient for interaction with human 14-3-3 beta protein. The segment at 97–167 (KRSPEEIEGA…DNSRSRSRSF (71 aa)) is disordered. A compositionally biased stretch (low complexity) spans 122-135 (ESASPQASPTSSTL). Positions 161–166 (RSRSRS) match the Phosphorylation-dependent binding motif motif. S166 carries the post-translational modification Phosphoserine.

As to quaternary structure, in infected HeLa cells colocalizes with host 14-3-3 protein (YWHAB); phosphorylation of Ser-166 is probably required. Interacts with Pkn1. In terms of processing, phosphorylated, possibly at more than one position, in infected HeLa cells. Phosphorylated by chlamydial kinase Pnk1.

The protein localises to the secreted. It localises to the host vacuole. The protein resides in the host pathogen-containing vacuole. Its subcellular location is the host pathogen-containing vacuole membrane. Functionally, inclusion membrane protein probably involved in early modification events of the chlamydial inclusion. The chain is Inclusion membrane protein G from Chlamydia trachomatis serovar L2 (strain ATCC VR-902B / DSM 19102 / 434/Bu).